The sequence spans 435 residues: GTPase Der (435 aa).

2 consecutive EngA-type G domains span residues 3–167 (NIVA…KDEG) and 176–351 (PRIA…ENRG). Residues 9 to 16 (GRPNVGKS), 56 to 60 (DTGGY), 119 to 122 (NKSD), 182 to 189 (GRPNAGKS), 229 to 233 (DTAGI), and 294 to 297 (NKWD) each bind GTP. In terms of domain architecture, KH-like spans 352–435 (KRIPTSELND…VPISIVYRKK (84 aa)).

Belongs to the TRAFAC class TrmE-Era-EngA-EngB-Septin-like GTPase superfamily. EngA (Der) GTPase family. Associates with the 50S ribosomal subunit.

In terms of biological role, GTPase that plays an essential role in the late steps of ribosome biogenesis. The chain is GTPase Der from Cytophaga hutchinsonii (strain ATCC 33406 / DSM 1761 / CIP 103989 / NBRC 15051 / NCIMB 9469 / D465).